A 38-amino-acid chain; its full sequence is MKVYSSIKKRCEHCRIIKRKGKRFVICKVNPSHKQRQG.

Belongs to the bacterial ribosomal protein bL36 family.

The polypeptide is Large ribosomal subunit protein bL36 (Prosthecochloris aestuarii (strain DSM 271 / SK 413)).